The following is a 316-amino-acid chain: Meiotically up-regulated gene 154 protein (316 aa).

4 helical membrane-spanning segments follow: residues 41 to 61, 88 to 108, 159 to 179, and 186 to 206; these read YSIP…IYIK, AFLS…FIFS, FLLN…WFYS, and LLTF…SLLL. Residues 291–316 are disordered; it reads HDSGISRDSSSPFKRFPHLSDGSSRF.

Its subcellular location is the endoplasmic reticulum membrane. Functionally, has a role in meiosis. The chain is Meiotically up-regulated gene 154 protein (mug154) from Schizosaccharomyces pombe (strain 972 / ATCC 24843) (Fission yeast).